An 858-amino-acid chain; its full sequence is Receptor-like protein kinase ANXUR2 (858 aa).

Positions 1–27 (MNEKLRILFSFLCFFYVLLVSPSQSNG) are cleaved as a signal peptide. Over 28 to 431 (QDISLSCGAS…VKKDFQGDKR (404 aa)) the chain is Extracellular. N-linked (GlcNAc...) asparagine glycans are attached at residues Asn-133, Asn-293, Asn-303, and Asn-331. The helical transmembrane segment at 432–452 (ITAFVIGSAGGVAAVLFCALC) threads the bilayer. At 453 to 858 (FTMYQRKRKF…FSQIVNPKGR (406 aa)) the chain is on the cytoplasmic side. Positions 521 to 794 (FDESNVIGVG…GDVLWNLEFA (274 aa)) constitute a Protein kinase domain. Residues 527 to 535 (IGVGGFGKV) and Lys-549 each bind ATP. The active-site Proton acceptor is the Asp-645. A disordered region spans residues 800–858 (TADGSRHRTPSNGGGSVDLGGGGGGVTVNISAGESDLGDDLSSEENSGIFSQIVNPKGR). Residues 811 to 825 (NGGGSVDLGGGGGGV) are compositionally biased toward gly residues. The span at 843–858 (EENSGIFSQIVNPKGR) shows a compositional bias: polar residues.

Belongs to the protein kinase superfamily. Ser/Thr protein kinase family. As to expression, expressed in pollen, but not in pistils or seedlings.

Its subcellular location is the cell membrane. The catalysed reaction is L-seryl-[protein] + ATP = O-phospho-L-seryl-[protein] + ADP + H(+). It catalyses the reaction L-threonyl-[protein] + ATP = O-phospho-L-threonyl-[protein] + ADP + H(+). In terms of biological role, receptor-like protein kinase that controls pollen tube behavior by directing rupture at proper timing to release the sperm cell. The polypeptide is Receptor-like protein kinase ANXUR2 (ANX2) (Arabidopsis thaliana (Mouse-ear cress)).